The chain runs to 220 residues: Fructose-6-phosphate aldolase (220 aa).

The active-site Schiff-base intermediate with substrate is the Lys85.

Belongs to the transaldolase family. Type 3A subfamily. In terms of assembly, homodecamer.

It localises to the cytoplasm. It catalyses the reaction beta-D-fructose 6-phosphate = dihydroxyacetone + D-glyceraldehyde 3-phosphate. Its function is as follows. Catalyzes the reversible formation of fructose 6-phosphate from dihydroxyacetone and D-glyceraldehyde 3-phosphate via an aldolization reaction. In Salmonella choleraesuis (strain SC-B67), this protein is Fructose-6-phosphate aldolase.